Consider the following 198-residue polypeptide: MVLECGVDETGRGSCISGIYASACILDPAHPIEGLRDSKKLSARKREILAEEIKQYALSWCIAQASLEEVEQLNVHHATLLAMKRAIEGLSIRANKVYVDGIHLPEVDIPAEAIVKGDDLIPAISAASILAKVARDGAMLEYHEKYPQYGFNSHKGYLTKAHREALKKYGPSPIHRKTYAPIRELLVGKDNEQIEMFE.

The RNase H type-2 domain occupies 2–191 (VLECGVDETG…IRELLVGKDN (190 aa)). A divalent metal cation-binding residues include D8, E9, and D100.

This sequence belongs to the RNase HII family. It depends on Mn(2+) as a cofactor. Mg(2+) serves as cofactor.

It is found in the cytoplasm. It carries out the reaction Endonucleolytic cleavage to 5'-phosphomonoester.. Functionally, endonuclease that specifically degrades the RNA of RNA-DNA hybrids. The protein is Ribonuclease HII of Desulforamulus reducens (strain ATCC BAA-1160 / DSM 100696 / MI-1) (Desulfotomaculum reducens).